The following is a 150-amino-acid chain: Transcription antitermination protein NusB (150 aa).

This sequence belongs to the NusB family.

Its function is as follows. Involved in transcription antitermination. Required for transcription of ribosomal RNA (rRNA) genes. Binds specifically to the boxA antiterminator sequence of the ribosomal RNA (rrn) operons. This chain is Transcription antitermination protein NusB, found in Streptococcus pyogenes serotype M6 (strain ATCC BAA-946 / MGAS10394).